A 212-amino-acid polypeptide reads, in one-letter code: Small ribosomal subunit protein uS3 (212 aa).

The region spanning 39–108 is the KH type-2 domain; sequence IKNYIKERYK…EITISVVEVR (70 aa).

It belongs to the universal ribosomal protein uS3 family. In terms of assembly, part of the 30S ribosomal subunit. Forms a tight complex with proteins S10 and S14.

Its function is as follows. Binds the lower part of the 30S subunit head. Binds mRNA in the 70S ribosome, positioning it for translation. In Aquifex aeolicus (strain VF5), this protein is Small ribosomal subunit protein uS3.